The chain runs to 186 residues: UPF0301 protein Daro_3893 (186 aa).

Belongs to the UPF0301 (AlgH) family.

This chain is UPF0301 protein Daro_3893, found in Dechloromonas aromatica (strain RCB).